A 243-amino-acid polypeptide reads, in one-letter code: Adenylate dimethylallyltransferase (243 aa).

This sequence belongs to the isopentenyl transferase family.

It carries out the reaction dimethylallyl diphosphate + AMP = N(6)-(dimethylallyl)adenosine 5'-phosphate + diphosphate. Transfers dimethylallyl groups to AMP as part of the biosynthesis of cytokinin phytohormones. This chain is Adenylate dimethylallyltransferase (tzs), found in Rhizobium rhizogenes (Agrobacterium rhizogenes).